A 266-amino-acid polypeptide reads, in one-letter code: MSFIDSMKLDLVGHLFGIRNRGLAAACCALAVASTIAFPYIRRDYQTFLSGGPSYAPQNIRGYFIVCVLALFRQEQKGLAIYDRLPEKRRWLPDLPPRNGPRPITTSHIIQRQRNQAPDPKFALEELKATVIPRVQARHTDLTHLSLSKFEFHAEAIFLLPSVPIDDPKNVPSHDTVRRTKREIAHMHDYHDFTLHLALAAQDGKEVVSKGWGQRHPLAGPGVPGPPTEWTFIYAPRNEEELAVVEMIIEASIGYMTNDPAGVVIA.

A helical membrane pass occupies residues 22 to 41; it reads GLAAACCALAVASTIAFPYI.

The protein belongs to the fungal luciferase family.

Its subcellular location is the membrane. It carries out the reaction 3-hydroxyhispidin + O2 = (E)-caffeoylpyruvate + hnu + CO2. It catalyses the reaction 3-hydroxyhispidin + O2 = 4-[(E)-2-(3,4-dihydroxyphenyl)ethenyl]-1,7-dihydroxy-2,3,5-trioxabicyclo[2.2.2]oct-7-en-6-one. Luciferase; part of the gene cluster that mediates the fungal bioluminescence cycle. Uses the fungal luciferin 3-hydroxyhispidin as a substrate to produce an endoperoxide as a high-energy intermediate with decomposition that yields oxyluciferin (also known as caffeoylpyruvate) and light emission. The fungal bioluminescence cycle begins with the hispidin synthetase that catalyzes the formation of hispidin which is further hydroxylated by the hispidin-3-hydroxylase, yielding the fungal luciferin 3-hydroxyhispidin. The luciferase then produces an endoperoxide as a high-energy intermediate with decomposition that yields oxyluciferin and light emission. Oxyluciferin can be recycled to caffeic acid by caffeoylpyruvate hydrolase. This is Luciferase from Armillaria gallica (Bulbous honey fungus).